Here is a 272-residue protein sequence, read N- to C-terminus: uncharacterized protein (272 aa).

The HTH merR-type domain occupies 1-27 (MDTLAFINRALVEEGYSLKDIKLVLIT).

This is an uncharacterized protein from Aquifex aeolicus (strain VF5).